A 277-amino-acid polypeptide reads, in one-letter code: Diaminopimelate epimerase (277 aa).

Residues asparagine 13, glutamine 46, and asparagine 66 each coordinate substrate. The active-site Proton donor is cysteine 75. Substrate-binding positions include 76–77, asparagine 160, asparagine 193, and 211–212; these read GN and ER. Cysteine 220 functions as the Proton acceptor in the catalytic mechanism. 221–222 lines the substrate pocket; the sequence is GS.

The protein belongs to the diaminopimelate epimerase family. As to quaternary structure, homodimer.

The protein localises to the cytoplasm. The enzyme catalyses (2S,6S)-2,6-diaminopimelate = meso-2,6-diaminopimelate. It functions in the pathway amino-acid biosynthesis; L-lysine biosynthesis via DAP pathway; DL-2,6-diaminopimelate from LL-2,6-diaminopimelate: step 1/1. Catalyzes the stereoinversion of LL-2,6-diaminopimelate (L,L-DAP) to meso-diaminopimelate (meso-DAP), a precursor of L-lysine and an essential component of the bacterial peptidoglycan. This is Diaminopimelate epimerase from Legionella pneumophila subsp. pneumophila (strain Philadelphia 1 / ATCC 33152 / DSM 7513).